Here is a 150-residue protein sequence, read N- to C-terminus: Cytochrome c oxidase subunit 5A, mitochondrial (150 aa).

A mitochondrion-targeting transit peptide spans 1 to 41; sequence MLGTALRRCAVAAASRAGPRGLQHPAPVPGPTAAIQSIRCY. Positions 2-17 match the SIFI-degron motif; sequence LGTALRRCAVAAASRA. An N6-acetyllysine mark is found at K87 and K113. Residue T141 is modified to Phosphothreonine.

This sequence belongs to the cytochrome c oxidase subunit 5A family. Component of the cytochrome c oxidase (complex IV, CIV), a multisubunit enzyme composed of 14 subunits. The complex is composed of a catalytic core of 3 subunits MT-CO1, MT-CO2 and MT-CO3, encoded in the mitochondrial DNA, and 11 supernumerary subunits COX4I, COX5A, COX5B, COX6A, COX6B, COX6C, COX7A, COX7B, COX7C, COX8 and NDUFA4, which are encoded in the nuclear genome. The complex exists as a monomer or a dimer and forms supercomplexes (SCs) in the inner mitochondrial membrane with NADH-ubiquinone oxidoreductase (complex I, CI) and ubiquinol-cytochrome c oxidoreductase (cytochrome b-c1 complex, complex III, CIII), resulting in different assemblies (supercomplex SCI(1)III(2)IV(1) and megacomplex MCI(2)III(2)IV(2)). Interacts with AFG1L. Interacts with RAB5IF. Post-translationally, in response to mitochondrial stress, the precursor protein is ubiquitinated by the SIFI complex in the cytoplasm before mitochondrial import, leading to its degradation. Within the SIFI complex, UBR4 initiates ubiquitin chain that are further elongated or branched by KCMF1.

The protein resides in the mitochondrion inner membrane. Its pathway is energy metabolism; oxidative phosphorylation. Its function is as follows. Component of the cytochrome c oxidase, the last enzyme in the mitochondrial electron transport chain which drives oxidative phosphorylation. The respiratory chain contains 3 multisubunit complexes succinate dehydrogenase (complex II, CII), ubiquinol-cytochrome c oxidoreductase (cytochrome b-c1 complex, complex III, CIII) and cytochrome c oxidase (complex IV, CIV), that cooperate to transfer electrons derived from NADH and succinate to molecular oxygen, creating an electrochemical gradient over the inner membrane that drives transmembrane transport and the ATP synthase. Cytochrome c oxidase is the component of the respiratory chain that catalyzes the reduction of oxygen to water. Electrons originating from reduced cytochrome c in the intermembrane space (IMS) are transferred via the dinuclear copper A center (CU(A)) of subunit 2 and heme A of subunit 1 to the active site in subunit 1, a binuclear center (BNC) formed by heme A3 and copper B (CU(B)). The BNC reduces molecular oxygen to 2 water molecules using 4 electrons from cytochrome c in the IMS and 4 protons from the mitochondrial matrix. The sequence is that of Cytochrome c oxidase subunit 5A, mitochondrial (COX5A) from Nycticebus coucang (Slow loris).